The sequence spans 394 residues: Mitogen-activated protein kinase 2 (394 aa).

Over residues 1 to 31 the composition is skewed to gly residues; the sequence is MRMEGGGGGGHGHHGGGGGGHGHHGGIGGGE. The segment at 1–33 is disordered; sequence MRMEGGGGGGHGHHGGGGGGHGHHGGIGGGEAQ. Residues 61-347 form the Protein kinase domain; the sequence is VPPIRPVGRG…VDEALCHPYL (287 aa). Residues 67–75 and Lys-90 contribute to the ATP site; that span reads VGRGACGII. Asp-187 functions as the Proton acceptor in the catalytic mechanism. The residue at position 221 (Tyr-221) is a Phosphotyrosine.

The protein belongs to the protein kinase superfamily. CMGC Ser/Thr protein kinase family. MAP kinase subfamily. In terms of processing, the phosphorylation on Tyr-221 activates the enzyme. A conserved Thr, which must also be phosphorylated to activate the enzyme in closely related sequences, is replaced by Met-219 in this sequence.

The enzyme catalyses L-seryl-[protein] + ATP = O-phospho-L-seryl-[protein] + ADP + H(+). It catalyses the reaction L-threonyl-[protein] + ATP = O-phospho-L-threonyl-[protein] + ADP + H(+). The polypeptide is Mitogen-activated protein kinase 2 (MPK2) (Oryza sativa subsp. japonica (Rice)).